We begin with the raw amino-acid sequence, 417 residues long: Methylthioribose-1-phosphate isomerase (417 aa).

The active-site Proton donor is the Asp285.

It belongs to the eIF-2B alpha/beta/delta subunits family. MtnA subfamily.

It localises to the cytoplasm. It is found in the nucleus. It carries out the reaction 5-(methylsulfanyl)-alpha-D-ribose 1-phosphate = 5-(methylsulfanyl)-D-ribulose 1-phosphate. It participates in amino-acid biosynthesis; L-methionine biosynthesis via salvage pathway; L-methionine from S-methyl-5-thio-alpha-D-ribose 1-phosphate: step 1/6. Its function is as follows. Catalyzes the interconversion of methylthioribose-1-phosphate (MTR-1-P) into methylthioribulose-1-phosphate (MTRu-1-P). This is Methylthioribose-1-phosphate isomerase from Lachancea thermotolerans (strain ATCC 56472 / CBS 6340 / NRRL Y-8284) (Yeast).